Reading from the N-terminus, the 297-residue chain is ClpXP adapter protein SpxH (297 aa).

The protein belongs to the SpxH family. In terms of assembly, interacts with Spx.

The protein localises to the cytoplasm. Functionally, adapter protein required for efficient degradation of Spx by ClpXP under non-stress conditions. Interaction with Spx stabilizes Spx and exposes the C-terminus of Spx for recognition and proteolysis by ClpXP. The chain is ClpXP adapter protein SpxH from Bacillus thuringiensis subsp. konkukian (strain 97-27).